The chain runs to 297 residues: Dehydrodolichyl diphosphate synthase complex subunit Nus1 (297 aa).

Transmembrane regions (helical) follow at residues 7–26 (LVWR…TSWL) and 40–56 (CCRA…GFTL). Basic residues predominate over residues 63 to 73 (GRNRRHHRHPH). A disordered region spans residues 63 to 86 (GRNRRHHRHPHGGPGPGPGPAATH). Residues 121-139 (IASLVVWCMAVGISYISVY) traverse the membrane as a helical segment. Asn148 and Asn275 each carry an N-linked (GlcNAc...) asparagine glycan. An RXG motif; crucial for prenyltransferase activity motif is present at residues 294–296 (RLG). Residues Leu295 and Gly296 each contribute to the isopentenyl diphosphate site.

It belongs to the UPP synthase family. In terms of assembly, the active dehydrodolichyl diphosphate synthase complex is a heterotetramer composed of a dimer of heterodimer of DHDDS and NUS1. Interacts with NPC2. The cofactor is Mg(2+). As to expression, highly expressed in heart, liver, kidney and pancreas.

It is found in the endoplasmic reticulum membrane. It carries out the reaction n isopentenyl diphosphate + (2E,6E)-farnesyl diphosphate = a di-trans,poly-cis-polyprenyl diphosphate + n diphosphate. It participates in protein modification; protein glycosylation. It functions in the pathway lipid metabolism. With DHDDS, forms the dehydrodolichyl diphosphate synthase (DDS) complex, an essential component of the dolichol monophosphate (Dol-P) biosynthetic machinery. Both subunits contribute to enzymatic activity, i.e. condensation of multiple copies of isopentenyl pyrophosphate (IPP) to farnesyl pyrophosphate (FPP) to produce dehydrodolichyl diphosphate (Dedol-PP), a precursor of dolichol phosphate which is utilized as a sugar carrier in protein glycosylation in the endoplasmic reticulum (ER). Synthesizes long-chain polyprenols, mostly of C95 and C100 chain length. Regulates the glycosylation and stability of nascent NPC2, thereby promoting trafficking of LDL-derived cholesterol. Acts as a specific receptor for the N-terminus of Nogo-B, a neural and cardiovascular regulator. The protein is Dehydrodolichyl diphosphate synthase complex subunit Nus1 of Mus musculus (Mouse).